We begin with the raw amino-acid sequence, 1270 residues long: DNA-directed RNA polymerase subunit beta (1270 aa).

This sequence belongs to the RNA polymerase beta chain family. The RNAP catalytic core consists of 2 alpha, 1 beta, 1 beta' and 1 omega subunit. When a sigma factor is associated with the core the holoenzyme is formed, which can initiate transcription.

It catalyses the reaction RNA(n) + a ribonucleoside 5'-triphosphate = RNA(n+1) + diphosphate. In terms of biological role, DNA-dependent RNA polymerase catalyzes the transcription of DNA into RNA using the four ribonucleoside triphosphates as substrates. The chain is DNA-directed RNA polymerase subunit beta from Bacteroides fragilis (strain ATCC 25285 / DSM 2151 / CCUG 4856 / JCM 11019 / LMG 10263 / NCTC 9343 / Onslow / VPI 2553 / EN-2).